Reading from the N-terminus, the 277-residue chain is Large ribosomal subunit protein uL2 (277 aa).

The disordered stretch occupies residues 227 to 277 (VMNPVDHPHGGGEGRTSGGRHPVTPWGVPTKGKKTRSKTKASDRLIMRRRK). A compositionally biased stretch (basic and acidic residues) spans 266–277 (KASDRLIMRRRK).

Belongs to the universal ribosomal protein uL2 family. Part of the 50S ribosomal subunit. Forms a bridge to the 30S subunit in the 70S ribosome.

In terms of biological role, one of the primary rRNA binding proteins. Required for association of the 30S and 50S subunits to form the 70S ribosome, for tRNA binding and peptide bond formation. It has been suggested to have peptidyltransferase activity; this is somewhat controversial. Makes several contacts with the 16S rRNA in the 70S ribosome. This chain is Large ribosomal subunit protein uL2, found in Magnetococcus marinus (strain ATCC BAA-1437 / JCM 17883 / MC-1).